The primary structure comprises 338 residues: Lumican (338 aa).

A signal peptide spans 1 to 18; sequence MNVCTFTLVLALVGSVSG. Gln-19 is modified (pyrrolidone carboxylic acid). Tyr-20, Tyr-21, Tyr-23, and Tyr-30 each carry sulfotyrosine. Residues 28 to 66 form the LRRNT domain; sequence FMYGELSPNCAPECNCPHSYPTAMYCDDLKLKSVPMVPP. 8 LRR repeats span residues 67-88, 91-114, 117-137, 138-159, 160-181, 185-205, 206-227, and 230-250; these read GIKY…AFEN, DLQW…VFSK, QLKK…PLPK, SLQD…DGLV, NLTF…ASLK, SLEY…GLPT, SLLT…YFNR, and GLQY…PGNS. Residue Asn-88 is glycosylated (N-linked (GlcNAc...) (keratan sulfate) asparagine). Asn-127 carries N-linked (GlcNAc...) (keratan sulfate) asparagine glycosylation. Asn-160 carries an N-linked (GlcNAc...) (keratan sulfate) asparagine glycan. N-linked (GlcNAc...) (keratan sulfate) asparagine glycosylation occurs at Asn-252. 2 LRR repeats span residues 255–276 and 277–296; these read SLLE…NENL and ENYY…SFCK. Residues Cys-295 and Cys-328 are joined by a disulfide bond. Position 304 is a phosphoserine (Ser-304). The stretch at 305 to 326 is one LRR 11 repeat; the sequence is KIKHLRLDGNPLTQSSLPPDMY.

Belongs to the small leucine-rich proteoglycan (SLRP) family. SLRP class II subfamily. Binds to laminin. Contains keratan sulfate.

It localises to the secreted. Its subcellular location is the extracellular space. The protein localises to the extracellular matrix. The sequence is that of Lumican (Lum) from Rattus norvegicus (Rat).